A 155-amino-acid chain; its full sequence is Protein-export protein SecB (155 aa).

Belongs to the SecB family. In terms of assembly, homotetramer, a dimer of dimers. One homotetramer interacts with 1 SecA dimer.

The protein resides in the cytoplasm. Functionally, one of the proteins required for the normal export of preproteins out of the cell cytoplasm. It is a molecular chaperone that binds to a subset of precursor proteins, maintaining them in a translocation-competent state. It also specifically binds to its receptor SecA. This chain is Protein-export protein SecB, found in Shigella sonnei (strain Ss046).